Reading from the N-terminus, the 299-residue chain is tRNA pseudouridine synthase B (299 aa).

Asp38 serves as the catalytic Nucleophile.

The protein belongs to the pseudouridine synthase TruB family. Type 1 subfamily.

The enzyme catalyses uridine(55) in tRNA = pseudouridine(55) in tRNA. Responsible for synthesis of pseudouridine from uracil-55 in the psi GC loop of transfer RNAs. The chain is tRNA pseudouridine synthase B from Pediococcus pentosaceus (strain ATCC 25745 / CCUG 21536 / LMG 10740 / 183-1w).